A 182-amino-acid chain; its full sequence is Ribulose bisphosphate carboxylase small subunit, chloroplastic (182 aa).

The transit peptide at 1-58 (MASSMLSTATVASINRVSPAQATMVAPFTGLKSTPVFPTTRKTNSDITSITSNGGKVQ) directs the protein to the chloroplast.

This sequence belongs to the RuBisCO small chain family. In terms of assembly, heterohexadecamer of 8 large and 8 small subunits.

The protein resides in the plastid. Its subcellular location is the chloroplast. RuBisCO catalyzes two reactions: the carboxylation of D-ribulose 1,5-bisphosphate, the primary event in carbon dioxide fixation, as well as the oxidative fragmentation of the pentose substrate. Both reactions occur simultaneously and in competition at the same active site. Although the small subunit is not catalytic it is essential for maximal activity. The protein is Ribulose bisphosphate carboxylase small subunit, chloroplastic of Manihot esculenta (Cassava).